A 294-amino-acid chain; its full sequence is Nucleotide-binding protein A2cp1_0165 (294 aa).

Residue 17–24 coordinates ATP; it reads GVSGSGKS. GTP is bound at residue 68 to 71; sequence DARE.

Belongs to the RapZ-like family.

Functionally, displays ATPase and GTPase activities. In Anaeromyxobacter dehalogenans (strain 2CP-1 / ATCC BAA-258), this protein is Nucleotide-binding protein A2cp1_0165.